We begin with the raw amino-acid sequence, 257 residues long: Nickel import system ATP-binding protein NikD (257 aa).

The region spanning 4-245 (IDIQNLTIKN…HLHPYTERLI (242 aa)) is the ABC transporter domain. 37 to 44 (GESGAGKS) lines the ATP pocket.

The protein belongs to the ABC transporter superfamily. As to quaternary structure, the complex is composed of two ATP-binding proteins (NikD and NikE), two transmembrane proteins (NikB and NikC) and a solute-binding protein (NikA).

The protein localises to the cell membrane. It catalyses the reaction Ni(2+)(out) + ATP + H2O = Ni(2+)(in) + ADP + phosphate + H(+). Its function is as follows. Part of the ABC transporter complex NikABCDE (Opp2) involved in nickel import. Probably responsible for energy coupling to the transport system. This chain is Nickel import system ATP-binding protein NikD, found in Staphylococcus aureus (strain MRSA252).